Reading from the N-terminus, the 31-residue chain is Photosystem II reaction center protein T (31 aa).

A helical membrane pass occupies residues 3-23 (ALVYTFLLVGTLGIIFFSIFF).

The protein belongs to the PsbT family. In terms of assembly, PSII is composed of 1 copy each of membrane proteins PsbA, PsbB, PsbC, PsbD, PsbE, PsbF, PsbH, PsbI, PsbJ, PsbK, PsbL, PsbM, PsbT, PsbY, PsbZ, Psb30/Ycf12, at least 3 peripheral proteins of the oxygen-evolving complex and a large number of cofactors. It forms dimeric complexes.

It localises to the plastid. The protein localises to the chloroplast thylakoid membrane. Functionally, found at the monomer-monomer interface of the photosystem II (PS II) dimer, plays a role in assembly and dimerization of PSII. PSII is a light-driven water plastoquinone oxidoreductase, using light energy to abstract electrons from H(2)O, generating a proton gradient subsequently used for ATP formation. This Bigelowiella natans (Pedinomonas minutissima) protein is Photosystem II reaction center protein T.